Consider the following 921-residue polypeptide: Ribosome-releasing factor 2, mitochondrial (921 aa).

A mitochondrion-targeting transit peptide spans 1–55; that stretch reads MVSALLLRARQNGRAARCLDYPKVKCWALASLPKSSLEKPGFSQVRRFSVFHPQS. Residues 60–368 form the tr-type G domain; the sequence is DLTRNIGIIA…SVVDLLPSPQ (309 aa). GTP-binding positions include 69-76, 152-156, and 206-209; these read AHIDAGKT, DTPGH, and NKMD.

The protein belongs to the TRAFAC class translation factor GTPase superfamily. Classic translation factor GTPase family. EF-G/EF-2 subfamily.

Its subcellular location is the mitochondrion. Functionally, mitochondrial GTPase that mediates the disassembly of ribosomes from messenger RNA at the termination of mitochondrial protein biosynthesis. Not involved in the GTP-dependent ribosomal translocation step during translation elongation. This Emericella nidulans (strain FGSC A4 / ATCC 38163 / CBS 112.46 / NRRL 194 / M139) (Aspergillus nidulans) protein is Ribosome-releasing factor 2, mitochondrial (mef2).